Here is a 282-residue protein sequence, read N- to C-terminus: MHVGIVAQRGNERATSLAGEIREQLRALEVTVWVDTATAEALACAGECGRDTTAFTDCDLVVSIGGDGTFLFAARGAGATPILGVNLGEVGFLNAVAPADAVEAVREEVNRYRETGAVRCREVPRVVAAGDGWASTPALNEVAIQGEQRGHGHGVAVDVRVDGSQYEATRADGVLVATPTGSTAYNLSEGGPLVQPSVDALVVTEMCGADALPPLVTGLDSEIRIRVETLDDGGEGRVVVASDGGRLTRVDPPVEMTVTAADEPARVAGPAADFFEALSKLE.

The Proton acceptor role is filled by aspartate 67. Residues 67–68 (DG), 140–141 (NE), histidine 151, arginine 170, aspartate 172, and 183–188 (TAYNLS) each bind NAD(+).

Belongs to the NAD kinase family. The cofactor is a divalent metal cation.

The protein localises to the cytoplasm. It catalyses the reaction NAD(+) + ATP = ADP + NADP(+) + H(+). In terms of biological role, involved in the regulation of the intracellular balance of NAD and NADP, and is a key enzyme in the biosynthesis of NADP. Catalyzes specifically the phosphorylation on 2'-hydroxyl of the adenosine moiety of NAD to yield NADP. The polypeptide is NAD kinase (Halobacterium salinarum (strain ATCC 700922 / JCM 11081 / NRC-1) (Halobacterium halobium)).